The sequence spans 335 residues: Glycerol-3-phosphate dehydrogenase [NAD(P)+] (335 aa).

NADPH contacts are provided by Ser10, Phe11, Arg31, and Lys105. Sn-glycerol 3-phosphate-binding residues include Lys105, Gly136, and Ser138. Residue Ala140 participates in NADPH binding. Sn-glycerol 3-phosphate is bound by residues Lys191, Asp244, Ser254, Arg255, and Asn256. Lys191 functions as the Proton acceptor in the catalytic mechanism. Arg255 contributes to the NADPH binding site. Val279 and Glu281 together coordinate NADPH.

This sequence belongs to the NAD-dependent glycerol-3-phosphate dehydrogenase family.

It localises to the cytoplasm. The catalysed reaction is sn-glycerol 3-phosphate + NAD(+) = dihydroxyacetone phosphate + NADH + H(+). It catalyses the reaction sn-glycerol 3-phosphate + NADP(+) = dihydroxyacetone phosphate + NADPH + H(+). It participates in membrane lipid metabolism; glycerophospholipid metabolism. Catalyzes the reduction of the glycolytic intermediate dihydroxyacetone phosphate (DHAP) to sn-glycerol 3-phosphate (G3P), the key precursor for phospholipid synthesis. The protein is Glycerol-3-phosphate dehydrogenase [NAD(P)+] of Myxococcus xanthus (strain DK1622).